The following is a 183-amino-acid chain: Ribosome-recycling factor (183 aa).

It belongs to the RRF family.

The protein resides in the cytoplasm. Its function is as follows. Responsible for the release of ribosomes from messenger RNA at the termination of protein biosynthesis. May increase the efficiency of translation by recycling ribosomes from one round of translation to another. The chain is Ribosome-recycling factor from Clostridium tetani (strain Massachusetts / E88).